A 286-amino-acid polypeptide reads, in one-letter code: uncharacterized protein (286 aa).

This is an uncharacterized protein from Acidianus convivator (ATV).